Reading from the N-terminus, the 490-residue chain is Cysteine desulfurase, mitochondrial (490 aa).

Pyridoxal 5'-phosphate-binding positions include 161 to 162, asparagine 241, glutamine 269, and 289 to 291; these read AT and SSH. Lysine 292 carries the N6-(pyridoxal phosphate)lysine modification. Residue threonine 329 participates in pyridoxal 5'-phosphate binding. The Cysteine persulfide intermediate role is filled by cysteine 414. Cysteine 414 is a binding site for [2Fe-2S] cluster.

Belongs to the class-V pyridoxal-phosphate-dependent aminotransferase family. NifS/IscS subfamily. Pyridoxal 5'-phosphate serves as cofactor.

The protein localises to the mitochondrion. The catalysed reaction is (sulfur carrier)-H + L-cysteine = (sulfur carrier)-SH + L-alanine. Functionally, catalyzes the removal of elemental sulfur from cysteine to produce alanine. It supplies the inorganic sulfur for iron-sulfur (Fe-S) clusters. Plays a role in both tRNA-processing and mitochondrial metabolism. Involved in the 2-thio-modification of both 5-carboxymethylaminomethyl-2-thiouridine in mitochondrial tRNAs and 5-methoxycarbonylmethyl-2-thiouridine (mcm5s2U) in cytoplasmic tRNAs. The protein is Cysteine desulfurase, mitochondrial of Eremothecium gossypii (strain ATCC 10895 / CBS 109.51 / FGSC 9923 / NRRL Y-1056) (Yeast).